Here is a 484-residue protein sequence, read N- to C-terminus: Threonine synthase-like 2 (484 aa).

An N6-(pyridoxal phosphate)lysine modification is found at lysine 113.

This sequence belongs to the threonine synthase family. Pyridoxal 5'-phosphate is required as a cofactor.

Acts as a catabolic phospho-lyase on both gamma- and beta-phosphorylated substrates. Degrades O-phospho-threonine (PThr) to alpha-ketobutyrate, ammonia and phosphate. This chain is Threonine synthase-like 2 (THNSL2), found in Pongo abelii (Sumatran orangutan).